The primary structure comprises 498 residues: Early growth response protein 1 (498 aa).

Disordered regions lie at residues 137-203 and 287-308; these read NASP…TASI and PSRMRKYPNRPSKTPPHERPYA. The span at 139–163 shows a compositional bias: low complexity; it reads SPSSAPSSSPSSSSSSSQSPPLSCS. A compositionally biased stretch (polar residues) spans 179–202; it reads FPNSSPELFPDQSPQPFQNASTAS. 3 consecutive C2H2-type zinc fingers follow at residues 307 to 331, 337 to 359, and 365 to 387; these read YACPVESCDRRFSRSDELTRHIRIH, FQCRICMRNFSRSDHLTTHIRTH, and FACDICGRKFARSDERKRHTKIH. Positions 378-422 are disordered; that stretch reads DERKRHTKIHLRQKDKKADKATPVSVASPVSSYSPSASTSYPSPV. Residues 382-392 are compositionally biased toward basic residues; that stretch reads RHTKIHLRQKD. Over residues 398–422 the composition is skewed to low complexity; that stretch reads ATPVSVASPVSSYSPSASTSYPSPV.

The protein belongs to the EGR C2H2-type zinc-finger protein family.

The protein resides in the nucleus. It is found in the cytoplasm. Transcriptional regulator. Recognizes and binds to the DNA sequence 5'-GCG(T/G)GGGCG-3'(EGR-site) in the promoter region of target genes. Binds double-stranded target DNA, irrespective of the cytosine methylation status. Regulates the transcription of numerous target genes, and thereby plays an important role in regulating the response to growth factors, DNA damage, and ischemia. Plays a role in the regulation of cell survival, proliferation and cell death. Mediates responses to ischemia and hypoxia; regulates the expression of proteins that are involved in inflammatory processes. Plays a role in regulating the expression of circadian clock genes. In Xenopus tropicalis (Western clawed frog), this protein is Early growth response protein 1.